The sequence spans 251 residues: NADPH-dependent oxidoreductase (251 aa).

It belongs to the flavin oxidoreductase frp family. Requires FMN as cofactor.

Functionally, reduces FMN, organic nitro compounds and disulfide DTNB. Involved in maintenance of the cellular redox state and the disulfide stress response. The polypeptide is NADPH-dependent oxidoreductase (nfrA) (Staphylococcus aureus (strain MSSA476)).